We begin with the raw amino-acid sequence, 1061 residues long: DNA primase TraC (1061 aa).

Positions 850 to 938 (PALVIGEGYA…GKAIFPIFAP (89 aa)) constitute a Toprim domain. The segment at 1034–1061 (EGQRQKVQQLKQQDIEQQEQRQRRARTY) is disordered.

Functionally, required for autonomous replication in E.coli. Transferred into the recipient cell during bacterial conjugation. Catalyzes the synthesis of short oligoribonucleotide primers with CpA or pCpA at their 5'-termini on a single-stranded template DNA. This is DNA primase TraC (traC) from Escherichia coli.